A 1128-amino-acid polypeptide reads, in one-letter code: Transient receptor potential-gamma protein (1128 aa).

Residues 1–325 (MMEEENTIRP…MALQAVDIIR (325 aa)) lie on the Cytoplasmic side of the membrane. 2 ANK repeats span residues 57–86 (LGRT…DTKD) and 131–160 (PDIT…VLPM). Residues 326-346 (IGIMFPIFSLAYILAPYSSIG) traverse the membrane as a helical segment. The Extracellular portion of the chain corresponds to 347–403 (QTMRKPFIKFICHSASYFTFLFLLMLASQRIETFIGGWFFADSSGMLNTMEELPTKR). The chain crosses the membrane as a helical span at residues 404–424 (GAKPTFIEWLILAWVSGLIWS). The Cytoplasmic portion of the chain corresponds to 425–444 (EVKQLWDVGLQEYLNDMWNV). The chain crosses the membrane as a helical span at residues 445–465 (IDFVTNSLYVATVALRVVSFF). Residues 466-492 (QVQKEMIYNSHATDLPRERWDAWDPML) are Extracellular-facing. Residues 493 to 513 (ISEGLFSAANIFSSLKLVYIF) traverse the membrane as a helical segment. Residues 514–535 (SVNPHLGPLQVSLSRMVMDIMK) lie on the Cytoplasmic side of the membrane. The chain crosses the membrane as a helical span at residues 536 to 556 (FFFLYVLVLFAFGSGLNQLLW). The Extracellular portion of the chain corresponds to 557–629 (YYADLEKKRC…GIKIFTRFWG (73 aa)). The chain crosses the membrane as a helical span at residues 630 to 650 (MLMFGTYSVINIVVLLNLLIA). The Cytoplasmic segment spans residues 651 to 1128 (MMNHSYQLIS…SCVSTTGAIG (478 aa)). 2 disordered regions span residues 865–898 (RQQS…TASS) and 1064–1111 (AAEA…SVNS). Residues 878 to 893 (ESPTTPTAPQGTQGAA) are compositionally biased toward low complexity. A compositionally biased stretch (polar residues) spans 1085 to 1111 (TQSQHDSVETNSTFTLSIDPSNTSVNS).

The protein belongs to the transient receptor (TC 1.A.4) family. STrpC subfamily. Interacts preferentially with trpl and interacts to a lower extent with trp. As to expression, expressed predominantly in the rhabdomeres of photoreceptor cells.

It localises to the cell projection. The protein localises to the rhabdomere membrane. A light-sensitive calcium channel that is required for inositide-mediated Ca(2+) entry in the retina during phospholipase C (PLC)-mediated phototransduction. Forms a regulated cation channel when heteromultimerized with trpl. This chain is Transient receptor potential-gamma protein (Trpgamma), found in Drosophila melanogaster (Fruit fly).